The chain runs to 1173 residues: Pleckstrin homology domain-containing family A member 6 (1173 aa).

Residues M1–M22 show a composition bias toward polar residues. The tract at residues M1 to S39 is disordered. In terms of domain architecture, PH spans P59–R158. A disordered region spans residues P163–R346. Residues L201–L233 show a composition bias toward basic and acidic residues. Residues S247 and S251 each carry the phosphoserine modification. Polar residues-rich tracts occupy residues N270–G281 and R311–V322. Residues S314, S459, S461, and S472 each carry the phosphoserine modification. Y492 is modified (phosphotyrosine). Residue S665 is modified to Phosphoserine. 2 disordered regions span residues R737 to I872 and A888 to Y984. 2 stretches are compositionally biased toward low complexity: residues S761–S782 and G789–E799. Residues E815–P824 show a composition bias toward pro residues. Position 864 is a phosphoserine (S864). Phosphothreonine is present on T868. Phosphoserine is present on S901. T908 bears the Phosphothreonine mark. The span at R915–S926 shows a compositional bias: polar residues. Phosphoserine is present on S925. Residues G940–R952 show a composition bias toward basic and acidic residues. Over residues M953 to S967 the composition is skewed to basic residues. Residues S973, S979, and S992 each carry the phosphoserine modification. T1045 is modified (phosphothreonine). Residue S1065 is modified to Phosphoserine. 2 disordered regions span residues P1093–E1114 and R1130–V1173. Phosphothreonine is present on T1140. Positions P1141 to N1155 are enriched in pro residues. The residue at position 1142 (S1142) is a Phosphoserine. Residue T1145 is modified to Phosphothreonine. 2 positions are modified to phosphoserine: S1146 and S1149. Residue T1151 is modified to Phosphothreonine.

The polypeptide is Pleckstrin homology domain-containing family A member 6 (Plekha6) (Mus musculus (Mouse)).